Here is a 574-residue protein sequence, read N- to C-terminus: Acyloxyacyl hydrolase (574 aa).

A signal peptide spans 1–22 (MKFPWKVFKTTLLLLLLSHSLA). A propeptide spanning residues 23 to 33 (SVPSEDQPGDS) is cleaved from the precursor. A Saposin B-type domain is found at 36–117 (HGQSCLGCVV…YALEFCKRGA (82 aa)). The segment at 37 to 69 (GQSCLGCVVLVSVIEQLAEVHNSSVQVAMERLC) is important for enzyme activity, localization to cytoplasmic vesicles, and protein stability. Cystine bridges form between cysteine 40/cysteine 113, cysteine 43/cysteine 107, cysteine 69/cysteine 82, cysteine 122/cysteine 452, cysteine 159/cysteine 168, cysteine 205/cysteine 229, cysteine 248/cysteine 328, and cysteine 375/cysteine 458. Asparagine 58 carries N-linked (GlcNAc...) asparagine glycosylation. Residues 172–176 (ELSIK) form a lipopolysaccharide binding region. Ca(2+) contacts are provided by aspartate 183, aspartate 185, aspartate 187, histidine 189, aspartate 204, asparagine 206, aspartate 207, aspartate 209, valine 212, aspartate 222, aspartate 226, asparagine 228, asparagine 230, isoleucine 232, and glutamate 244. Asparagine 206 carries an N-linked (GlcNAc...) asparagine glycan. Serine 262 is a catalytic residue. N-linked (GlcNAc...) asparagine glycans are attached at residues asparagine 408 and asparagine 465.

In terms of assembly, heterodimer of the large and small subunits; disulfide-linked. Ca(2+) serves as cofactor. In terms of processing, cleaved into a large and a small subunit. Post-translationally, the small subunit is N-glycosylated. Detected in peritoneal macrophages (at protein level). Strongly expressed in kidney cortex, where it may be produced by proximal tubule cells. In liver, expressed at high levels in Kupffer cells. Expressed by dendritic cells. Detected at low levels in alveolar macrophages.

The protein resides in the secreted. It is found in the cytoplasmic vesicle. It carries out the reaction a 3-(acyloxy)acyl derivative of bacterial toxin + H2O = a 3-hydroxyacyl derivative of bacterial toxin + a fatty acid + H(+). Functionally, removes the secondary (acyloxyacyl-linked) fatty acyl chains from the lipid A region of bacterial lipopolysaccharides (LPS). By breaking down LPS, terminates the host response to bacterial infection and prevents prolonged and damaging inflammatory responses. In peritoneal macrophages, seems to be important for recovery from a state of immune tolerance following infection by Gram-negative bacteria. This chain is Acyloxyacyl hydrolase, found in Mus musculus (Mouse).